The primary structure comprises 688 residues: Pescadillo homolog (688 aa).

Residues 351-470 (EVASLFASFT…KLLRHDLYAP (120 aa)) form the BRCT domain. Disordered regions lie at residues 411-442 (RPPL…GTRM) and 496-688 (AEQE…TKGR). A compositionally biased stretch (pro residues) spans 412–424 (PPLPESALPPLPQ). The stretch at 496–536 (AEQESDGEAERQAEEENEEEESEVEGLSMDKEMVETENSEA) forms a coiled coil. 4 stretches are compositionally biased toward acidic residues: residues 510–519 (EENEEEESEV), 530–544 (ETEN…EESV), 554–565 (GSDDEEEESEED), and 576–589 (EAAD…DDEE). The span at 619–634 (KKSKKQKPLAKKHAAQ) shows a compositional bias: basic residues. Residues 627–686 (LAKKHAAQKKKEQEELERQKMMMSRKKRKLLDKMLYSNKKKDEEAEKLRRKRRKIEQGTK) are a coiled coil. Basic and acidic residues predominate over residues 635-646 (KKKEQEELERQK).

Belongs to the pescadillo family. In terms of assembly, component of the NOP7 complex, composed of ERB1, NOP7 and YTM1. The complex is held together by ERB1, which interacts with NOP7 via its N-terminal domain and with YTM1 via a high-affinity interaction between the seven-bladed beta-propeller domains of the 2 proteins. The NOP7 complex associates with the 66S pre-ribosome.

Its subcellular location is the nucleus. It is found in the nucleolus. The protein localises to the nucleoplasm. In terms of biological role, component of the NOP7 complex, which is required for maturation of the 25S and 5.8S ribosomal RNAs and formation of the 60S ribosome. This chain is Pescadillo homolog, found in Coccidioides immitis (strain RS) (Valley fever fungus).